Reading from the N-terminus, the 225-residue chain is Uridylate kinase (225 aa).

9-10 is an ATP binding site; that stretch reads GS. G46 is a UMP binding site. ATP-binding residues include G47 and R51. UMP contacts are provided by residues D67 and 115–121; that span reads THPAHTT. ATP contacts are provided by T141, N142, Y147, and D150.

Belongs to the UMP kinase family. Homohexamer.

It is found in the cytoplasm. The enzyme catalyses UMP + ATP = UDP + ADP. It functions in the pathway pyrimidine metabolism; CTP biosynthesis via de novo pathway; UDP from UMP (UMPK route): step 1/1. With respect to regulation, inhibited by UTP. Functionally, catalyzes the reversible phosphorylation of UMP to UDP. The sequence is that of Uridylate kinase from Methanococcus maripaludis (strain C7 / ATCC BAA-1331).